Consider the following 915-residue polypeptide: Scaffold attachment factor B1 (915 aa).

Residues Met-1 to Ser-24 are compositionally biased toward low complexity. Positions Met-1 to Asp-33 are disordered. N-acetylalanine is present on Ala-2. Ser-24 and Ser-55 each carry phosphoserine. Residues Leu-31 to Ile-65 enclose the SAP domain. A disordered region spans residues Ala-64–Thr-118. A compositionally biased stretch (acidic residues) spans Asp-67 to Ile-77. Phosphoserine is present on Ser-79. Residues Glu-98–Thr-118 show a composition bias toward acidic residues. Glycyl lysine isopeptide (Lys-Gly) (interchain with G-Cter in SUMO2) cross-links involve residues Lys-172 and Lys-186. A Phosphothreonine modification is found at Thr-188. 3 positions are modified to phosphoserine: Ser-195, Ser-197, and Ser-209. Residues Leu-221–Asn-407 form a disordered region. Residues Cys-225 to Ser-234 show a composition bias toward basic and acidic residues. A Glycyl lysine isopeptide (Lys-Gly) (interchain with G-Cter in SUMO) cross-link involves residue Lys-231. Polar residues predominate over residues Ser-275–Ala-286. Residues Val-293–Cys-309 are compositionally biased toward basic and acidic residues. A Glycyl lysine isopeptide (Lys-Gly) (interchain with G-Cter in SUMO) cross-link involves residue Lys-294. Low complexity predominate over residues Glu-319 to Ala-330. The segment covering Glu-346 to Phe-359 has biased composition (basic and acidic residues). Residues Glu-371–Ser-383 are compositionally biased toward polar residues. Lys-381 is covalently cross-linked (Glycyl lysine isopeptide (Lys-Gly) (interchain with G-Cter in SUMO2)). Residues Ser-383 and Ser-384 each carry the phosphoserine modification. Residues Asp-390–Arg-401 show a composition bias toward basic and acidic residues. A Glycyl lysine isopeptide (Lys-Gly) (interchain with G-Cter in SUMO2) cross-link involves residue Lys-392. Positions Arg-406–Asn-484 constitute an RRM domain. Residue Ser-415 is modified to Phosphoserine. 2 stretches are compositionally biased toward basic and acidic residues: residues Ile-477–Arg-551 and Gly-559–Lys-570. Disordered regions lie at residues Ile-477–Glu-641, Arg-671–Pro-708, and Phe-749–Tyr-915. Residues Lys-483, Lys-514, Lys-543, and Lys-570 each participate in a glycyl lysine isopeptide (Lys-Gly) (interchain with G-Cter in SUMO2) cross-link. An interaction with POLR2A. Interaction with SFRS1; SFRS9 and SFRS10 region spans residues Gly-528–Arg-792. Lys-578 is covalently cross-linked (Glycyl lysine isopeptide (Lys-Gly) (interchain with G-Cter in SUMO1); alternate). A Glycyl lysine isopeptide (Lys-Gly) (interchain with G-Cter in SUMO2); alternate cross-link involves residue Lys-578. Phosphoserine is present on residues Ser-580, Ser-582, Ser-601, and Ser-604. Positions Gly-581 to Glu-641 are enriched in basic and acidic residues. The Nuclear localization signal motif lies at Lys-599–Asp-616. The segment at Lys-599 to Tyr-915 is interaction with SAFB2. At Lys-607 the chain carries N6-acetyllysine. The span at Phe-749 to Asp-796 shows a compositional bias: basic and acidic residues. Arg-811 bears the Omega-N-methylarginine mark. Basic and acidic residues-rich tracts occupy residues Pro-817–Ser-832 and Met-841–Gly-851. A Glycyl lysine isopeptide (Lys-Gly) (interchain with G-Cter in SUMO2) cross-link involves residue Lys-847. Asymmetric dimethylarginine is present on residues Arg-868, Arg-874, and Arg-884. A compositionally biased stretch (gly residues) spans Gly-892 to Ser-901. The span at Arg-905–Tyr-915 shows a compositional bias: basic and acidic residues.

Monomer and homodimer. Forms heterodimers with SAFB2. Interacts with KHDRBS3. Interacts with CLK2. Interacts with POLR2A, SRSF1/ASF, SRSF9/SRp30c and SFSF10/TRA2B. Interacts with isoform 1 and isoform 2 of SRPK1 and inhibits its activity. Interacts with RBMX. Interacts with FUS. Interacts with ZBED4. Post-translationally, sumoylated by PIAS1 with SUMO1 and SUMO2/3, desumoylated by SENP1. Sumoylation is required for transcriptional repressor activity. Ubiquitous. Expressed at high levels in the CNS and at low levels in the liver. Expressed in a wide number of breast cancer cell lines.

It is found in the nucleus. Its function is as follows. Binds to scaffold/matrix attachment region (S/MAR) DNA and forms a molecular assembly point to allow the formation of a 'transcriptosomal' complex (consisting of SR proteins and RNA polymerase II) coupling transcription and RNA processing. Functions as an estrogen receptor corepressor and can also bind to the HSP27 promoter and decrease its transcription. Thereby acts as a negative regulator of cell proliferation. When associated with RBMX, binds to and stimulates transcription from the SREBF1 promoter. This is Scaffold attachment factor B1 (SAFB) from Homo sapiens (Human).